We begin with the raw amino-acid sequence, 80 residues long: Lantibiotic Flvalpha.b (80 aa).

A propeptide spans 1–38 (MNKNPIYRSEEEAKNIACGNVAAELDENSQALDAINGA) (cleaved by FlvT). Residues T43 and T47 each carry the 2,3-didehydrobutyrine; by FlvM1 modification. The segment at residues 52-55 (TVGC) is a cross-link (beta-methyllanthionine (Thr-Cys); by FlvM1). The lanthionine (Ser-Cys); by FlvM1 cross-link spans 58-68 (SYGLGNGGYCC). Cross-links (beta-methyllanthionine (Thr-Cys); by FlvM1) lie at residues 69–74 (TYTVEC) and 71–78 (TVECSKTC).

Post-translationally, the lanthionine formed by Ser-58 and Cys-68 forms a putative lipid II binding motif. In terms of processing, maturation of FlvA1 peptides involves the enzymatic conversion of Thr, and Ser into dehydrated AA and the formation of thioether bonds with cysteines. Modifications are processed by the flavecin synthetase FlvM1. This is followed by membrane translocation and cleavage of the modified precursor. Contains DL-lanthionine and DL-beta-methyllanthionine, when coepressed in E.coli with the flavecin synthetase FlvM1.

It is found in the secreted. In terms of biological role, lanthionine-containing peptide antibiotic (lantibiotic) only active on Gram-positive bacteria in synergy with Flvbeta peptides, which are encoded by the same operon than Flvalpha.a. Shows antibacterial activity in synergy with Flvbeta.b, Flvbeta.c, Flvbeta.e and Flvbeta.g. Does not show antibacterial activity when tested with Flvbeta.a, Flvbeta.d, Flvbeta.f and Flvbeta.h. The bactericidal activity of lantibiotics is based on depolarization of energized bacterial cytoplasmic membranes, initiated by the formation of aqueous transmembrane pores. In Ruminococcus flavefaciens, this protein is Lantibiotic Flvalpha.b.